We begin with the raw amino-acid sequence, 429 residues long: MSKSLQAIRGMNDILPEQTPAWRYLERTFAGLLDGYGYSEIRLPILEFTELFARGIGEGTDVVDKEMYTFLDRNGESLTMRPEGTAGCVRAVLEHGLSGGGQVQKLWYTGPMFRYEKPQKGRYRQFHQIGVEVFNLPGPDIDAELIILTWRLWQKLGMADAVTLQLNTLGSSEARARYREALVAYLQERFEQLDEDSQRRMTTNPLRILDSKVESTQALLVGAPTLHDYLDEESIAHFEGLKARLDAVGLRYEINQKLVRGLDYYCRTAFEWVTDKLGAQGTVCGGGRYDGLVSQFGGKPTPGVGFAMGVERLVLLLETLGVIPAELNRPADLYVCAFGEPAELAALTLAEQLRSAIPGIRLLVNAGAGSFKSQFKKADKSGARFALILGEDEVANRVVGFKPLRDEGEQQSIAWDALPEHLAACLAQA.

It belongs to the class-II aminoacyl-tRNA synthetase family. In terms of assembly, homodimer.

It localises to the cytoplasm. The enzyme catalyses tRNA(His) + L-histidine + ATP = L-histidyl-tRNA(His) + AMP + diphosphate + H(+). The protein is Histidine--tRNA ligase of Pseudomonas aeruginosa (strain UCBPP-PA14).